The following is a 479-amino-acid chain: Sulfate adenylyltransferase subunit 1 (479 aa).

The region spanning 25 to 239 is the tr-type G domain; that stretch reads KSLLRFLTCG…EVLETVDIQR (215 aa). The segment at 34–41 is G1; the sequence is GSVDDGKS. Position 34-41 (34-41) interacts with GTP; that stretch reads GSVDDGKS. Residues 92-96 are G2; it reads GITID. Residues 113–116 are G3; the sequence is DTPG. Residues 113–117 and 168–171 each bind GTP; these read DTPGH and NKMD. A G4 region spans residues 168-171; it reads NKMD. The G5 stretch occupies residues 206–208; that stretch reads SAL.

The protein belongs to the TRAFAC class translation factor GTPase superfamily. Classic translation factor GTPase family. CysN/NodQ subfamily. In terms of assembly, heterodimer composed of CysD, the smaller subunit, and CysN.

The enzyme catalyses sulfate + ATP + H(+) = adenosine 5'-phosphosulfate + diphosphate. It functions in the pathway sulfur metabolism; hydrogen sulfide biosynthesis; sulfite from sulfate: step 1/3. With CysD forms the ATP sulfurylase (ATPS) that catalyzes the adenylation of sulfate producing adenosine 5'-phosphosulfate (APS) and diphosphate, the first enzymatic step in sulfur assimilation pathway. APS synthesis involves the formation of a high-energy phosphoric-sulfuric acid anhydride bond driven by GTP hydrolysis by CysN coupled to ATP hydrolysis by CysD. In Salmonella newport (strain SL254), this protein is Sulfate adenylyltransferase subunit 1.